A 142-amino-acid chain; its full sequence is Small ribosomal subunit protein bS6 (142 aa).

Residues 96 to 142 are disordered; that stretch reads VTGQSEMLKAEENRSERRERRERPEHDGSADGDDSDSDSDNSDNADE. The segment covering 103–124 has biased composition (basic and acidic residues); that stretch reads LKAEENRSERRERRERPEHDGS. Residues 125–142 show a composition bias toward acidic residues; sequence ADGDDSDSDSDNSDNADE.

The protein belongs to the bacterial ribosomal protein bS6 family.

Its function is as follows. Binds together with bS18 to 16S ribosomal RNA. This Pseudomonas fluorescens (strain Pf0-1) protein is Small ribosomal subunit protein bS6.